Reading from the N-terminus, the 32-residue chain is Variegin (32 aa).

The segment at 1-32 (SDQGDVAEPKMHKTAPPFDFEAIPEEYLDDES) is disordered. The contains the active site stretch occupies residues 8–14 (EPKMHKT). T14 is a glycosylation site (O-linked (Hex) threonine). The segment covering 22-32 (AIPEEYLDDES) has biased composition (acidic residues).

In terms of assembly, interacts with human F2 (thrombin); the interaction results in thrombin inhibition.

The protein localises to the secreted. Its function is as follows. Thrombin inhibitor. Does not inhibit other serine proteases. This Amblyomma variegatum (Tropical bont tick) protein is Variegin.